We begin with the raw amino-acid sequence, 367 residues long: Inhibin alpha chain (367 aa).

The first 20 residues, 1-20 (MVPPLPLLLLLLLVPQGGHG), serve as a signal peptide directing secretion. A propeptide spanning residues 21-63 (CQGSELDREIVLAKVRALFLDALGPPAVTGEGGDPGVRRLPRR) is cleaved from the precursor. A propeptide spans 64 to 233 (HALGGFARRG…PPSGGERTRR (170 aa)) (inhibin alpha N-terminal region). N-linked (GlcNAc...) asparagine glycans are attached at residues asparagine 147 and asparagine 269. Cystine bridges form between cysteine 263/cysteine 329, cysteine 292/cysteine 364, and cysteine 296/cysteine 366.

It belongs to the TGF-beta family. In terms of assembly, dimeric, linked by one or more disulfide bonds. Activin B is a dimer of alpha and beta-B. Inhibin A is a dimer of alpha and beta-A. Inhibin B is a dimer of alpha and beta-B. Interacts with TGFBR3L; this interaction regulates female fertility. Post-translationally, proteolytic processing yields a number of bioactive forms, consisting either solely of the mature alpha chain, of the most N-terminal propeptide linked through a disulfide bond to the mature alpha chain, or of the entire proprotein.

Its subcellular location is the secreted. In terms of biological role, inhibins and activins inhibit and activate, respectively, the secretion of follitropin by the pituitary gland. Inhibins/activins are involved in regulating a number of diverse functions such as hypothalamic and pituitary hormone secretion, gonadal hormone secretion, germ cell development and maturation, erythroid differentiation, insulin secretion, nerve cell survival, embryonic axial development or bone growth, depending on their subunit composition. Inhibins appear to oppose the functions of activins. Functionally, inhibin A is a dimer of alpha/INHA and beta-A/INHBA that functions as a feedback regulator in the hypothalamic-pituitary-gonadal (HPG) axis. Inhibits the secretion of FSH from the anterior pituitary gland by acting on pituitary gonadotrope cells. Antagonizes activin A by binding to the proteoglycan, betaglycan, and forming a stable complex with and, thereby, sequestering type II activin receptors while excluding type I receptor. Inhibin B is a dimer of alpha and beta-B that plays a crucial role in the regulation of the reproductive system by inhibiting the secretion of follicle-stimulating hormone (FSH) from the anterior pituitary gland. Thereby, maintains reproductive homeostasis in both males and females. Acts as a more potent suppressor of FSH release than inhibin A. Functions as competitive receptor antagonist binding activin type II receptors with high affinity in the presence of the TGF-beta type III coreceptor/TGFBR3L. In Equus caballus (Horse), this protein is Inhibin alpha chain (INHA).